Here is a 455-residue protein sequence, read N- to C-terminus: Fumarate hydratase class II (455 aa).

Substrate-binding positions include 96–98, 122–125, 132–134, and threonine 180; these read SGT, HPND, and SSN. The active-site Proton donor/acceptor is the histidine 181. Serine 311 is an active-site residue. Substrate contacts are provided by residues serine 312 and 317–319; that span reads KVN.

The protein belongs to the class-II fumarase/aspartase family. Fumarase subfamily. Homotetramer.

It is found in the cytoplasm. The catalysed reaction is (S)-malate = fumarate + H2O. It participates in carbohydrate metabolism; tricarboxylic acid cycle; (S)-malate from fumarate: step 1/1. Functionally, involved in the TCA cycle. Catalyzes the stereospecific interconversion of fumarate to L-malate. This Listeria monocytogenes serovar 1/2a (strain ATCC BAA-679 / EGD-e) protein is Fumarate hydratase class II.